Reading from the N-terminus, the 154-residue chain is Large ribosomal subunit protein uL13 (154 aa).

The protein belongs to the universal ribosomal protein uL13 family. In terms of assembly, part of the 50S ribosomal subunit.

Functionally, this protein is one of the early assembly proteins of the 50S ribosomal subunit, although it is not seen to bind rRNA by itself. It is important during the early stages of 50S assembly. This is Large ribosomal subunit protein uL13 from Rhizobium meliloti (strain 1021) (Ensifer meliloti).